Reading from the N-terminus, the 295-residue chain is Putative NADH-ubiquinone oxidoreductase MJ0520 (295 aa).

Transmembrane regions (helical) follow at residues 8 to 28 (LIGA…LLGL), 69 to 89 (LYIF…IIAI), 129 to 149 (VFSA…YLTT), 163 to 183 (IHGS…ILLV), 199 to 219 (IVSG…YIAE), 220 to 240 (AIAY…PLVI), 243 to 263 (PVLT…VNGL), and 273 to 293 (VMLQ…RLIV).

It belongs to the complex I subunit 1 family.

It localises to the cell membrane. It carries out the reaction a ubiquinone + NADH + 5 H(+)(in) = a ubiquinol + NAD(+) + 4 H(+)(out). This Methanocaldococcus jannaschii (strain ATCC 43067 / DSM 2661 / JAL-1 / JCM 10045 / NBRC 100440) (Methanococcus jannaschii) protein is Putative NADH-ubiquinone oxidoreductase MJ0520.